The sequence spans 149 residues: Potassium binding protein Kbp (149 aa).

Residues 23–91 form the BON domain; it reads DKDDQAKKVQ…SVDDQVKTAT (69 aa). The LysM domain occupies 97 to 146; sequence QFYTVKSGDTLSAISKQVYGNANLYNKIFEANKPMLKSPDKIYPGQVLRI.

The protein localises to the cytoplasm. Its function is as follows. Highly specific potassium binding protein that is required for normal growth in the presence of high levels of external K(+). May act as a sensor of cytoplasmic K(+) concentration. This Escherichia coli O6:H1 (strain CFT073 / ATCC 700928 / UPEC) protein is Potassium binding protein Kbp.